The following is a 262-amino-acid chain: Fibroin light chain (262 aa).

The first 16 residues, 1 to 16 (MKPIFLVLLVATSAYA), serve as a signal peptide directing secretion. S19 bears the N-acetylserine; in short form mark. A disulfide bond links C101 and C160.

Silk fibroin elementary unit consists in a disulfide-linked heavy and light chain and a p25 glycoprotein in molar ratios of 6:6:1. This results in a complex of approximately 2.3 MDa. Post-translationally, the interchain disulfide bridge is essential for the intracellular transport and secretion of fibroin. Partially N-terminally processed to yield a short form which lacks the first two residues of the long form. In terms of tissue distribution, produced exclusively in the posterior (PSG) section of silk glands, which are essentially modified salivary glands.

The protein localises to the secreted. Functionally, it is likely that the major role of L-chain is to prevent the retention of H-chain in ER by forming the disulfide linkage. This chain is Fibroin light chain (FIBL), found in Bombyx mori (Silk moth).